Consider the following 563-residue polypeptide: MNTKELIASELASIIDSLDQEAILKLLETPKNSEMGDIAFPAFSLAKVERKAPQMIAAELAEKMNSQAFEKVVATGPYVNFFLDKSAISAQVLQAVTTEKEHYADQNIGKQENVVIDMSSPNIAKPFSIGHLRSTVIGDSLSHIFQKIGYQTVKVNHLGDWGKQFGMLIVAYKKWGDEEAVKAHPIDELLKLYVRINAEAENDPSLDEEAREWFRKLENGDEEALALWQWFRDESLVEFNRLYNELKVEFDSYNGEAFYNDKMDAVVDILSEKGLLLESEGAQVVNLEKYGIEHPALIKKSDGATLYITRDLAAALYRKNEYQFAKSIYVVGQEQSAHFKQLKAVLQEMGYDWSDDITHVPFGLVTKEGKKLSTRKGNVILLEPTVAEAVSRAKVQIEAKNPELENKDQVAHAVGVGAIKFYDLKTDRTNGYDFDLEAMVSFEGETGPYVQYAYARIQSILRKADFKPETAGNYSLNDTESWEIIKLIQDFPRIINRAADNFEPSIIAKFAISLAQSFNKYYAHTRILDESPERDSRLALSYATAVVLKEALRLLGVEAPEKM.

The short motif at Pro-121 to His-131 is the 'HIGH' region element.

This sequence belongs to the class-I aminoacyl-tRNA synthetase family. In terms of assembly, monomer.

It localises to the cytoplasm. The enzyme catalyses tRNA(Arg) + L-arginine + ATP = L-arginyl-tRNA(Arg) + AMP + diphosphate. This chain is Arginine--tRNA ligase, found in Streptococcus pneumoniae (strain P1031).